The primary structure comprises 255 residues: PABIR family member 2 (255 aa).

The interval 1 to 24 (MAQEKMDLDFEADTSEGATLRRSN) is disordered. Ala2 carries the N-acetylalanine modification. Phosphoserine is present on residues Ser25, Ser33, Ser50, and Ser58. At Thr112 the chain carries Phosphothreonine. Residues Ser115 and Ser119 each carry the phosphoserine modification. Position 122 is an omega-N-methylarginine (Arg122). Ser145 carries the post-translational modification Phosphoserine. Disordered stretches follow at residues 169–196 (LGPLKRKGEMEMESQPKRPFQGTTSMLS) and 219–238 (SGLSSDSLATGSAPAESPVA). A compositionally biased stretch (basic and acidic residues) spans 174–184 (RKGEMEMESQP).

The protein belongs to the FAM122 family.

The chain is PABIR family member 2 from Mus musculus (Mouse).